Consider the following 438-residue polypeptide: sn-glycerol-3-phosphate-binding periplasmic protein UgpB (438 aa).

The N-terminal stretch at 1–23 is a signal peptide; that stretch reads MKPLHYTASALALGLALMGNAQA. Sn-glycerol 3-phosphate-binding residues include Tyr-65, Glu-89, Ser-144, Ser-270, Gly-307, Tyr-346, and Arg-397.

This sequence belongs to the bacterial solute-binding protein 1 family. The complex is composed of two ATP-binding proteins (UgpC), two transmembrane proteins (UgpA and UgpE) and a solute-binding protein (UgpB).

It localises to the periplasm. In terms of biological role, part of the ABC transporter complex UgpBAEC involved in sn-glycerol-3-phosphate (G3P) import. Binds G3P. The protein is sn-glycerol-3-phosphate-binding periplasmic protein UgpB (ugpB) of Shigella dysenteriae serotype 1 (strain Sd197).